The chain runs to 220 residues: Thiopurine S-methyltransferase (220 aa).

Trp-10, Leu-45, Glu-66, and Arg-123 together coordinate S-adenosyl-L-methionine.

The protein belongs to the class I-like SAM-binding methyltransferase superfamily. TPMT family.

It localises to the cytoplasm. It catalyses the reaction S-adenosyl-L-methionine + a thiopurine = S-adenosyl-L-homocysteine + a thiopurine S-methylether.. The sequence is that of Thiopurine S-methyltransferase from Pseudomonas syringae pv. syringae (strain B728a).